The following is a 75-amino-acid chain: Small ribosomal subunit protein bS18 (75 aa).

This sequence belongs to the bacterial ribosomal protein bS18 family. Part of the 30S ribosomal subunit. Forms a tight heterodimer with protein bS6.

In terms of biological role, binds as a heterodimer with protein bS6 to the central domain of the 16S rRNA, where it helps stabilize the platform of the 30S subunit. This chain is Small ribosomal subunit protein bS18, found in Shewanella halifaxensis (strain HAW-EB4).